A 432-amino-acid polypeptide reads, in one-letter code: Glutamate-1-semialdehyde 2,1-aminomutase (432 aa).

An N6-(pyridoxal phosphate)lysine modification is found at Lys-265.

The protein belongs to the class-III pyridoxal-phosphate-dependent aminotransferase family. HemL subfamily. In terms of assembly, homodimer. Pyridoxal 5'-phosphate serves as cofactor.

The protein resides in the cytoplasm. The enzyme catalyses (S)-4-amino-5-oxopentanoate = 5-aminolevulinate. The protein operates within porphyrin-containing compound metabolism; protoporphyrin-IX biosynthesis; 5-aminolevulinate from L-glutamyl-tRNA(Glu): step 2/2. The polypeptide is Glutamate-1-semialdehyde 2,1-aminomutase (Photobacterium profundum (strain SS9)).